The sequence spans 195 residues: Probable nicotinate-nucleotide adenylyltransferase (195 aa).

Belongs to the NadD family.

The catalysed reaction is nicotinate beta-D-ribonucleotide + ATP + H(+) = deamido-NAD(+) + diphosphate. It participates in cofactor biosynthesis; NAD(+) biosynthesis; deamido-NAD(+) from nicotinate D-ribonucleotide: step 1/1. Its function is as follows. Catalyzes the reversible adenylation of nicotinate mononucleotide (NaMN) to nicotinic acid adenine dinucleotide (NaAD). This is Probable nicotinate-nucleotide adenylyltransferase from Dictyoglomus thermophilum (strain ATCC 35947 / DSM 3960 / H-6-12).